We begin with the raw amino-acid sequence, 1020 residues long: MGRGAGREYSPAATTAENGGGKKKQKEKELDELKKEVAMDDHKLSLDELGRKYQVDLSKGLTNQRAQDVLARDGPNALTPPPTTPEWVKFCRQLFGGFSILLWIGAILCFLAYGIQAAMEDEPSNDNLYLGVVLAAVVIVTGCFSYYQEAKSSKIMDSFKNMVPQQALVIREGEKMQINAEEVVVGDLVEVKGGDRVPADLRIISSHGCKVDNSSLTGESEPQTRSPEFTHENPLETRNICFFSTNCVEGTARGIVIATGDRTVMGRIATLASGLEVGRTPIAMEIEHFIQLITGVAVFPGVSFFVLSLILGYSWLEAVIFLIGIIVANVPEGLLATVTVCLTLTAKRMARKNCLVKNLEAVETLGSTSTICSDKTGTLTQNRMTVAHMWFDNQIREADTTEDQSGATFDKRSPTWTALSRIAGLCNRAVFKAGQENISVSKRDTAGDASESALLKCIELSCGSVRKMRDRNPKVAEIPFNSTNKYQLSIHEREDSPQSHVLVMKGAPERILDRCPTILVQGKEIPLDKEMQDAFQNAYMELGGLGERVLGFCQLNLPSGKFPRGFKFDTDELNFPTEKLCFVGLMSMIDPPRAAVPDAVGKCRSAGIKVIMVTGDHPITAKAIAKGVGIISEGNETVEDIAARLNIPMSQVNPREAKACVVHGSDLKDMTSEQLDEILKNHTEIVFARTSPQQKLVIVEGCQRQGAIVAVTGDGVNDSPALKKADIGIAMGISGSDVSKQAADMILLDDNFASIVTGVEEGRLVFDNLKKSIAYTLTSNIPEITPFLLFIIANIPLPLGTVTILCIDLGTDMVPAISLAYEAAESDIMKRQPRNSQTDKLVNERLISMAYGQIGMIQALGGFFTYFVILAENGFLPSRLLGIRLDWDDRTMNDLEDSYGQEWTYEQRKVVEFTCHTAFFASIVVVQWADLIICKTRRNSVFQQGMKNKILIFGLLEETALAAFLSYCPGMGVALRMYPLKVTWWFCAFPYSLLIFIYDEVRKLILRRYPGGWVEKETYY.

Residues 1–5 (MGRGA) constitute a propeptide that is removed on maturation. The segment at 1 to 31 (MGRGAGREYSPAATTAENGGGKKKQKEKELD) is disordered. Residues 6 to 85 (GREYSPAATT…NALTPPPTTP (80 aa)) are Cytoplasmic-facing. Phosphoserine is present on S10. Residues 80–82 (PPP) form an interaction with phosphoinositide-3 kinase region. A helical membrane pass occupies residues 86–106 (EWVKFCRQLFGGFSILLWIGA). The Extracellular portion of the chain corresponds to 107–129 (ILCFLAYGIQAAMEDEPSNDNLY). Residues 130–150 (LGVVLAAVVIVTGCFSYYQEA) traverse the membrane as a helical segment. The Cytoplasmic portion of the chain corresponds to 151–286 (KSSKIMDSFK…VGRTPIAMEI (136 aa)). Over residues 212-227 (DNSSLTGESEPQTRSP) the composition is skewed to polar residues. The interval 212 to 231 (DNSSLTGESEPQTRSPEFTH) is disordered. The helical transmembrane segment at 287–306 (EHFIQLITGVAVFPGVSFFV) threads the bilayer. At 307–318 (LSLILGYSWLEA) the chain is on the extracellular side. Residues 319–336 (VIFLIGIIVANVPEGLLA) form a helical membrane-spanning segment. The Cytoplasmic portion of the chain corresponds to 337 to 769 (TVTVCLTLTA…EEGRLVFDNL (433 aa)). The 4-aspartylphosphate intermediate role is filled by D374. A phosphoserine mark is found at S439, S450, S496, and S559. At T570 the chain carries Phosphothreonine. Phosphoserine is present on residues S587 and S672. D714 and D718 together coordinate Mg(2+). The helical transmembrane segment at 770–789 (KKSIAYTLTSNIPEITPFLL) threads the bilayer. Topologically, residues 790–799 (FIIANIPLPL) are extracellular. A helical transmembrane segment spans residues 800–820 (GTVTILCIDLGTDMVPAISLA). Residues 821 to 840 (YEAAESDIMKRQPRNSQTDK) are Cytoplasmic-facing. S826 carries the phosphoserine modification. A helical membrane pass occupies residues 841 to 863 (LVNERLISMAYGQIGMIQALGGF). Residues 864 to 915 (FTYFVILAENGFLPSRLLGIRLDWDDRTMNDLEDSYGQEWTYEQRKVVEFTC) are Extracellular-facing. The helical transmembrane segment at 916-935 (HTAFFASIVVVQWADLIICK) threads the bilayer. At 936–948 (TRRNSVFQQGMKN) the chain is on the cytoplasmic side. Residue S940 is modified to Phosphoserine; by PKA. The chain crosses the membrane as a helical span at residues 949–967 (KILIFGLLEETALAAFLSY). The Extracellular segment spans residues 968 to 982 (CPGMGVALRMYPLKV). The helical transmembrane segment at 983–1003 (TWWFCAFPYSLLIFIYDEVRK) threads the bilayer. Residues 1004–1020 (LILRRYPGGWVEKETYY) lie on the Cytoplasmic side of the membrane.

The protein belongs to the cation transport ATPase (P-type) (TC 3.A.3) family. Type IIC subfamily. As to quaternary structure, the sodium/potassium-transporting ATPase is composed of a catalytic alpha subunit, an auxiliary non-catalytic beta subunit and an additional regulatory subunit. Interacts with regulatory subunit FXYD1.

The protein resides in the membrane. It localises to the cell membrane. It carries out the reaction K(+)(out) + Na(+)(in) + ATP + H2O = K(+)(in) + Na(+)(out) + ADP + phosphate + H(+). This is the catalytic component of the active enzyme, which catalyzes the hydrolysis of ATP coupled with the exchange of sodium and potassium ions across the plasma membrane. This action creates the electrochemical gradient of sodium and potassium, providing the energy for active transport of various nutrients. This Pongo abelii (Sumatran orangutan) protein is Sodium/potassium-transporting ATPase subunit alpha-2 (ATP1A2).